A 102-amino-acid polypeptide reads, in one-letter code: MISLLSIKMQAIKELDSEEEPKVGEFYKGNTISFCKNSLENDTQLPQILFCINPKSIRNFLFPPIAISDPKEAQNHCSSYYYIKYRYYIVQSRCGMMGRMSF.

This is an uncharacterized protein from Schizosaccharomyces pombe (strain 972 / ATCC 24843) (Fission yeast).